The sequence spans 223 residues: Thiamine-phosphate synthase (223 aa).

4-amino-2-methyl-5-(diphosphooxymethyl)pyrimidine-binding positions include 37–41 (QFREK) and aspartate 72. Mg(2+)-binding residues include aspartate 73 and aspartate 92. 4-amino-2-methyl-5-(diphosphooxymethyl)pyrimidine is bound at residue serine 110. 136–138 (TQS) contributes to the 2-[(2R,5Z)-2-carboxy-4-methylthiazol-5(2H)-ylidene]ethyl phosphate binding site. Lysine 139 is a 4-amino-2-methyl-5-(diphosphooxymethyl)pyrimidine binding site. 2-[(2R,5Z)-2-carboxy-4-methylthiazol-5(2H)-ylidene]ethyl phosphate-binding positions include glycine 168 and 188–189 (IS).

Belongs to the thiamine-phosphate synthase family. Mg(2+) serves as cofactor.

The enzyme catalyses 2-[(2R,5Z)-2-carboxy-4-methylthiazol-5(2H)-ylidene]ethyl phosphate + 4-amino-2-methyl-5-(diphosphooxymethyl)pyrimidine + 2 H(+) = thiamine phosphate + CO2 + diphosphate. It catalyses the reaction 2-(2-carboxy-4-methylthiazol-5-yl)ethyl phosphate + 4-amino-2-methyl-5-(diphosphooxymethyl)pyrimidine + 2 H(+) = thiamine phosphate + CO2 + diphosphate. It carries out the reaction 4-methyl-5-(2-phosphooxyethyl)-thiazole + 4-amino-2-methyl-5-(diphosphooxymethyl)pyrimidine + H(+) = thiamine phosphate + diphosphate. It functions in the pathway cofactor biosynthesis; thiamine diphosphate biosynthesis; thiamine phosphate from 4-amino-2-methyl-5-diphosphomethylpyrimidine and 4-methyl-5-(2-phosphoethyl)-thiazole: step 1/1. In terms of biological role, condenses 4-methyl-5-(beta-hydroxyethyl)thiazole monophosphate (THZ-P) and 2-methyl-4-amino-5-hydroxymethyl pyrimidine pyrophosphate (HMP-PP) to form thiamine monophosphate (TMP). This chain is Thiamine-phosphate synthase, found in Streptococcus agalactiae serotype III (strain NEM316).